The primary structure comprises 469 residues: Sorting and assembly machinery component 50 homolog (469 aa).

In terms of domain architecture, POTRA spans 45 to 125; sequence VVVQHVHFDG…LDVTFEVTEL (81 aa). An N6-methyllysine modification is found at Lys-255.

This sequence belongs to the SAM50/omp85 family. As to quaternary structure, associates with the mitochondrial contact site and cristae organizing system (MICOS) complex, composed of at least MICOS10/MIC10, CHCHD3/MIC19, CHCHD6/MIC25, APOOL/MIC27, IMMT/MIC60, APOO/MIC23/MIC26 and QIL1/MIC13. This complex was also known under the names MINOS or MitOS complex. The MICOS complex associates with mitochondrial outer membrane proteins SAMM50, MTX1 and MTX2 (together described as components of the mitochondrial outer membrane sorting assembly machinery (SAM) complex) and DNAJC11, mitochondrial inner membrane protein TMEM11 and with HSPA9. The MICOS and SAM complexes together with DNAJC11 are part of a large protein complex spanning both membranes termed the mitochondrial intermembrane space bridging (MIB) complex. Interacts with IMMT/MIC60. Interacts with CHCHD3/MIC19. Interacts with ARMC1.

Its subcellular location is the mitochondrion outer membrane. The protein resides in the cytoplasm. The protein localises to the mitochondrion. In terms of biological role, plays a crucial role in the maintenance of the structure of mitochondrial cristae and the proper assembly of the mitochondrial respiratory chain complexes. Required for the assembly of TOMM40 into the TOM complex. In Bos taurus (Bovine), this protein is Sorting and assembly machinery component 50 homolog (SAMM50).